The sequence spans 470 residues: BTB/POZ domain-containing protein 17 (470 aa).

Positions 1–18 (MRMKGLYVVPLLLALVES) are cleaved as a signal peptide. The BTB domain maps to 53–122 (SDTTLRIRTA…FYCGEISVNL (70 aa)). One can recognise a BACK domain in the interval 161–261 (VVSWYHYALR…ITPSQLFQIQ (101 aa)).

It is found in the secreted. This chain is BTB/POZ domain-containing protein 17 (btbd17), found in Xenopus laevis (African clawed frog).